Here is a 93-residue protein sequence, read N- to C-terminus: Guanine nucleotide-binding protein subunit gamma 1 (93 aa).

A coiled-coil region spans residues 12-52 (TRGRHRIQAELKKLEQEARFLEEELEELDKTDKVSAALQEL). Residues 20–93 (AELKKLEQEA…DLRRCKCWFL (74 aa)) enclose the G protein gamma domain. The S-palmitoyl cysteine moiety is linked to residue Cys-88. Cys-90 is subject to Cysteine methyl ester. Cys-90 is lipidated: S-farnesyl cysteine. Positions 91 to 93 (WFL) are cleaved as a propeptide — removed in mature form.

As to quaternary structure, g proteins are composed of 3 units, alpha, beta and gamma. Interacts with the beta subunit RGB1.

Its subcellular location is the cell membrane. In terms of biological role, guanine nucleotide-binding proteins (G proteins) are involved as modulators or transducers in various transmembrane signaling systems. The chain is Guanine nucleotide-binding protein subunit gamma 1 from Oryza sativa subsp. indica (Rice).